The sequence spans 490 residues: UDP-N-acetylmuramate--L-alanine ligase (490 aa).

Gly126–Thr132 is an ATP binding site.

The protein belongs to the MurCDEF family.

The protein localises to the cytoplasm. It carries out the reaction UDP-N-acetyl-alpha-D-muramate + L-alanine + ATP = UDP-N-acetyl-alpha-D-muramoyl-L-alanine + ADP + phosphate + H(+). It participates in cell wall biogenesis; peptidoglycan biosynthesis. Cell wall formation. This is UDP-N-acetylmuramate--L-alanine ligase from Sodalis glossinidius (strain morsitans).